The primary structure comprises 332 residues: Formamidase (332 aa).

In terms of domain architecture, CN hydrolase spans 14-259 (FLAALIQYPV…WEIVTAEVYP (246 aa)). E60 (proton acceptor) is an active-site residue. K132 serves as the catalytic Proton donor. The active-site Nucleophile is the C165.

The protein belongs to the carbon-nitrogen hydrolase superfamily. Aliphatic amidase family.

The enzyme catalyses formamide + H2O = formate + NH4(+). In terms of biological role, is an aliphatic amidase with a restricted substrate specificity, as it only hydrolyzes formamide. This is Formamidase from Bacillus cereus (strain Q1).